The chain runs to 276 residues: UPF0328 protein ECU01_0090/ECU01_1520/ECU02_1550/ECU08_0020 (276 aa).

Positions M1 to H24 are disordered.

This sequence belongs to the UPF0328 family.

This Encephalitozoon cuniculi (strain GB-M1) (Microsporidian parasite) protein is UPF0328 protein ECU01_0090/ECU01_1520/ECU02_1550/ECU08_0020.